A 612-amino-acid chain; its full sequence is Actin-binding LIM protein 2 (612 aa).

LIM zinc-binding domains lie at 22 to 81 (ILCN…LYGT), 81 to 141 (TRCF…TLLG), 151 to 210 (RSCG…KFGI), and 210 to 270 (IRCD…ARTE). Cysteine 83, cysteine 86, histidine 103, cysteine 106, cysteine 109, cysteine 112, cysteine 131, and cysteine 134 together coordinate Zn(2+). Residues cysteine 212, cysteine 215, histidine 232, cysteine 235, cysteine 238, cysteine 241, histidine 260, and cysteine 263 each coordinate Zn(2+). Residues 269–278 (TEDKSKETRT) show a composition bias toward basic and acidic residues. Disordered regions lie at residues 269 to 295 (TEDKSKETRTSSESIVSVPASSTSGSP) and 341 to 433 (AVGD…DNIY). The segment covering 279 to 295 (SSESIVSVPASSTSGSP) has biased composition (low complexity). Residues serine 282, serine 294, glycine 351, arginine 356, serine 365, and serine 368 each carry the phosphoserine modification. The span at 364–373 (SSPSSAGSVS) shows a compositional bias: low complexity. Over residues 394–416 (SGRSTPSLSVHSDSRPPSSTYQQ) the composition is skewed to polar residues. A Phosphoserine modification is found at serine 453. A disordered region spans residues 471–498 (ADTRTNSPDLDSQSLSLSSGTDQEPLQR). Threonine 473 is modified (phosphothreonine). Residues serine 477 and serine 579 each carry the phosphoserine modification. Residues 477–489 (SPDLDSQSLSLSS) are compositionally biased toward low complexity. An HP domain is found at 544-612 (TREYKIYPYD…NDLKKKALLF (69 aa)).

As to quaternary structure, interacts with F-actin and ABRA. In terms of tissue distribution, expressed in brain. Highly expressed in caudate/putamen, moderately expressed in the olfactory bulb. In the hippocampus, expressed in the CA1, CA2 and CA3 fields. In the cerebellum, expressed in Purkinje cells.

Its subcellular location is the cytoplasm. Its function is as follows. May act as scaffold protein. May stimulate ABRA activity and ABRA-dependent SRF transcriptional activity. The polypeptide is Actin-binding LIM protein 2 (Ablim2) (Mus musculus (Mouse)).